The chain runs to 49 residues: Large ribosomal subunit protein bL33 (49 aa).

Belongs to the bacterial ribosomal protein bL33 family.

This Lachnoclostridium phytofermentans (strain ATCC 700394 / DSM 18823 / ISDg) (Clostridium phytofermentans) protein is Large ribosomal subunit protein bL33.